A 548-amino-acid polypeptide reads, in one-letter code: Glucose-6-phosphate isomerase 1 (548 aa).

Residue glutamate 353 is the Proton donor of the active site. Residues histidine 384 and lysine 512 contribute to the active site.

The protein belongs to the GPI family.

The protein resides in the cytoplasm. The enzyme catalyses alpha-D-glucose 6-phosphate = beta-D-fructose 6-phosphate. Its pathway is carbohydrate biosynthesis; gluconeogenesis. It participates in carbohydrate degradation; glycolysis; D-glyceraldehyde 3-phosphate and glycerone phosphate from D-glucose: step 2/4. Functionally, catalyzes the reversible isomerization of glucose-6-phosphate to fructose-6-phosphate. This Neisseria meningitidis serogroup A / serotype 4A (strain DSM 15465 / Z2491) protein is Glucose-6-phosphate isomerase 1.